We begin with the raw amino-acid sequence, 182 residues long: Bifunctional protein PyrR (182 aa).

Residues 99–111 carry the PRPP-binding motif; sequence VILVDDVLYTGRT.

It belongs to the purine/pyrimidine phosphoribosyltransferase family. PyrR subfamily. Homodimer and homohexamer; in equilibrium.

The enzyme catalyses UMP + diphosphate = 5-phospho-alpha-D-ribose 1-diphosphate + uracil. Its function is as follows. Regulates transcriptional attenuation of the pyrimidine nucleotide (pyr) operon by binding in a uridine-dependent manner to specific sites on pyr mRNA. This disrupts an antiterminator hairpin in the RNA and favors formation of a downstream transcription terminator, leading to a reduced expression of downstream genes. Also displays a weak uracil phosphoribosyltransferase activity which is not physiologically significant. In Alkaliphilus metalliredigens (strain QYMF), this protein is Bifunctional protein PyrR.